A 471-amino-acid polypeptide reads, in one-letter code: Putative ABC transporter ATP-binding protein STK_11360 (471 aa).

2 consecutive ABC transporter domains span residues 4–241 and 255–470; these read LEIK…LEPL and VILE…VIKD. Residues 37 to 44 and 286 to 293 contribute to the ATP site; these read GKSGSGKS and GDNGSGKS.

This sequence belongs to the ABC transporter superfamily.

The protein localises to the cell membrane. Its function is as follows. Probably part of an ABC transporter complex. Responsible for energy coupling to the transport system. The sequence is that of Putative ABC transporter ATP-binding protein STK_11360 from Sulfurisphaera tokodaii (strain DSM 16993 / JCM 10545 / NBRC 100140 / 7) (Sulfolobus tokodaii).